The following is a 311-amino-acid chain: Olfactory receptor 52J3 (311 aa).

Residues M1–M27 are Extracellular-facing. N5 carries an N-linked (GlcNAc...) asparagine glycan. A helical transmembrane segment spans residues W28–L48. At L49 to T56 the chain is on the cytoplasmic side. Residues L57–T77 form a helical membrane-spanning segment. The Extracellular segment spans residues T78–A101. C99 and C191 are oxidised to a cystine. The helical transmembrane segment at Q102–F122 threads the bilayer. Over D123–Q141 the chain is Cytoplasmic. The helical transmembrane segment at V142–V162 threads the bilayer. The Extracellular portion of the chain corresponds to Y163 to G198. Residues I199–S218 form a helical membrane-spanning segment. Topologically, residues Y219–A238 are cytoplasmic. A helical transmembrane segment spans residues L239–S259. The Extracellular segment spans residues F260 to H274. The helical transmembrane segment at I275–V295 threads the bilayer. Topologically, residues R296–K311 are cytoplasmic.

It belongs to the G-protein coupled receptor 1 family.

The protein localises to the cell membrane. Its function is as follows. Odorant receptor. The sequence is that of Olfactory receptor 52J3 (OR52J3) from Homo sapiens (Human).